The sequence spans 587 residues: MSWARTHLRSALSLAAVSARGATTEGAARRWLSAWPAPQEPGMEYQDAVRMLNTLQTNASYLEQVKRQRSDPQAQLEAMEVYLARSGLQVEDLNQLNIIHVTGTKGKGSTCAFTERILRSYGLKTGFFSSPHLVQVRERIRINGKPISPELFTKHFWRLYHQLEEFKDDSHVAMPAYFRFLTLMAFHVFLQEKVDLAVVEVGIGGAYDCTNIIRKPVVCGVSSLGMDHTSLLGDTVEKIAWQKGGIFKPGVPAFTVLQPEGPLAVLRDRAQQTSCPLYLCPPLEALEDGGLPLTLGLEGEHQRSNAALALQLAHCWLEQQDHQDIRELKVSRPSMRWQLPLAPVFHPTSHMRHGLRDTEWPGRTQVLRRGPLTWYLDGAHTTSSVQACVRWYCQSLQRSKHPSGGPEVYVLLFNSTGDRDSAALLKLLQPCQFDYAVFCPNLTEVSSTENADQQNFTVTLDQVLLRCLQHQQHWSCLSEKQASPDFLSSPSPEPGRPGSLQPALRPPHSTGTNSLVFSCISHALQWISQGRDPIFQAPSPPRSLLSHPTASSGASILREAGAIHVLVTGSLHLVGGVLKLLEPSLSQ.

Residues 1 to 42 (MSWARTHLRSALSLAAVSARGATTEGAARRWLSAWPAPQEPG) constitute a mitochondrion transit peptide. 106–109 (GKGS) serves as a coordination point for ATP. Mg(2+)-binding residues include serine 130, glutamate 200, and histidine 228. Positions 363 and 377 each coordinate ATP. Residues 484-508 (PDFLSSPSPEPGRPGSLQPALRPPH) are disordered. At serine 539 the chain carries Phosphoserine.

This sequence belongs to the folylpolyglutamate synthase family. As to quaternary structure, monomer. The cofactor is a monovalent cation.

The protein localises to the mitochondrion inner membrane. It localises to the mitochondrion matrix. It is found in the cytoplasm. The enzyme catalyses (6S)-5,6,7,8-tetrahydrofolyl-(gamma-L-Glu)(n) + L-glutamate + ATP = (6S)-5,6,7,8-tetrahydrofolyl-(gamma-L-Glu)(n+1) + ADP + phosphate + H(+). The protein operates within cofactor biosynthesis; tetrahydrofolylpolyglutamate biosynthesis. Its function is as follows. Catalyzes conversion of folates to polyglutamate derivatives allowing concentration of folate compounds in the cell and the intracellular retention of these cofactors, which are important substrates for most of the folate-dependent enzymes that are involved in one-carbon transfer reactions involved in purine, pyrimidine and amino acid synthesis. The chain is Folylpolyglutamate synthase, mitochondrial (FPGS) from Cricetulus griseus (Chinese hamster).